The primary structure comprises 296 residues: GTPase Era (296 aa).

The 168-residue stretch at 3–170 (KSGFVTIVGR…KELMFKYIPE (168 aa)) folds into the Era-type G domain. Positions 11-18 (GRPNVGKS) are G1. Position 11–18 (11–18 (GRPNVGKS)) interacts with GTP. The tract at residues 37-41 (QTTRN) is G2. Residues 58–61 (DTPG) form a G3 region. Residues 58 to 62 (DTPGI) and 120 to 123 (NKID) each bind GTP. Residues 120–123 (NKID) form a G4 region. A G5 region spans residues 149–151 (ISA). In terms of domain architecture, KH type-2 spans 201–278 (LSEEVPHGIA…YIRLWVKVKE (78 aa)).

It belongs to the TRAFAC class TrmE-Era-EngA-EngB-Septin-like GTPase superfamily. Era GTPase family. As to quaternary structure, monomer.

The protein localises to the cytoplasm. It localises to the cell membrane. Functionally, an essential GTPase that binds both GDP and GTP, with rapid nucleotide exchange. Plays a role in 16S rRNA processing and 30S ribosomal subunit biogenesis and possibly also in cell cycle regulation and energy metabolism. This is GTPase Era from Clostridium botulinum (strain Okra / Type B1).